The primary structure comprises 251 residues: MNLISIPALQDNYIWLLSNKANRCVIVDPGEASPVLNALDQNALLPEAILLTHHHNDHVGGVSEILNHYPNLPVFGPKETAKCGATYLVEEGNTVSLLNSEFSVIEVPGHTSGHIAYYNAPFLFCGDTLFSAGCGRIFEGTPKQMYESIQKIAELPDDTVVCCAHEYTLSNLRFSNDIWPEDPDIESYLHKISQIREKSQSSLPTTLGLERRINLFLRCHEIDLKRKISNEPENIENWQVFKMLRSKKDCF.

Zn(2+) is bound by residues His-53, His-55, Asp-57, His-58, His-110, Asp-127, and His-165.

The protein belongs to the metallo-beta-lactamase superfamily. Glyoxalase II family. Monomer. Zn(2+) serves as cofactor.

It carries out the reaction an S-(2-hydroxyacyl)glutathione + H2O = a 2-hydroxy carboxylate + glutathione + H(+). Its pathway is secondary metabolite metabolism; methylglyoxal degradation; (R)-lactate from methylglyoxal: step 2/2. In terms of biological role, thiolesterase that catalyzes the hydrolysis of S-D-lactoyl-glutathione to form glutathione and D-lactic acid. The protein is Hydroxyacylglutathione hydrolase of Pectobacterium atrosepticum (strain SCRI 1043 / ATCC BAA-672) (Erwinia carotovora subsp. atroseptica).